The chain runs to 425 residues: D-amino acid dehydrogenase (425 aa).

3-17 (VLVMGAGVIGVTTAY) lines the FAD pocket.

It belongs to the DadA oxidoreductase family. FAD serves as cofactor.

The catalysed reaction is a D-alpha-amino acid + A + H2O = a 2-oxocarboxylate + AH2 + NH4(+). The protein operates within amino-acid degradation; D-alanine degradation; NH(3) and pyruvate from D-alanine: step 1/1. Oxidative deamination of D-amino acids. The sequence is that of D-amino acid dehydrogenase from Rhodopseudomonas palustris (strain HaA2).